A 384-amino-acid polypeptide reads, in one-letter code: 8-amino-7-oxononanoate synthase (384 aa).

R21 lines the substrate pocket. 108 to 109 (GF) is a pyridoxal 5'-phosphate binding site. H133 is a binding site for substrate. 3 residues coordinate pyridoxal 5'-phosphate: S179, H207, and T233. An N6-(pyridoxal phosphate)lysine modification is found at K236. T352 is a binding site for substrate.

The protein belongs to the class-II pyridoxal-phosphate-dependent aminotransferase family. BioF subfamily. In terms of assembly, homodimer. Requires pyridoxal 5'-phosphate as cofactor.

The enzyme catalyses 6-carboxyhexanoyl-[ACP] + L-alanine + H(+) = (8S)-8-amino-7-oxononanoate + holo-[ACP] + CO2. The protein operates within cofactor biosynthesis; biotin biosynthesis. Functionally, catalyzes the decarboxylative condensation of pimeloyl-[acyl-carrier protein] and L-alanine to produce 8-amino-7-oxononanoate (AON), [acyl-carrier protein], and carbon dioxide. The protein is 8-amino-7-oxononanoate synthase of Escherichia fergusonii (strain ATCC 35469 / DSM 13698 / CCUG 18766 / IAM 14443 / JCM 21226 / LMG 7866 / NBRC 102419 / NCTC 12128 / CDC 0568-73).